The following is a 263-amino-acid chain: Hydroxyethylthiazole kinase (263 aa).

A substrate-binding site is contributed by methionine 39. Residues lysine 115 and threonine 160 each contribute to the ATP site. Glycine 187 lines the substrate pocket.

It belongs to the Thz kinase family. It depends on Mg(2+) as a cofactor.

It carries out the reaction 5-(2-hydroxyethyl)-4-methylthiazole + ATP = 4-methyl-5-(2-phosphooxyethyl)-thiazole + ADP + H(+). It participates in cofactor biosynthesis; thiamine diphosphate biosynthesis; 4-methyl-5-(2-phosphoethyl)-thiazole from 5-(2-hydroxyethyl)-4-methylthiazole: step 1/1. In terms of biological role, catalyzes the phosphorylation of the hydroxyl group of 4-methyl-5-beta-hydroxyethylthiazole (THZ). This chain is Hydroxyethylthiazole kinase, found in Staphylococcus aureus (strain COL).